Here is a 147-residue protein sequence, read N- to C-terminus: D-aminoacyl-tRNA deacylase (147 aa).

A Gly-cisPro motif, important for rejection of L-amino acids motif is present at residues 136–137 (GP).

This sequence belongs to the DTD family. As to quaternary structure, homodimer.

The protein resides in the cytoplasm. The catalysed reaction is glycyl-tRNA(Ala) + H2O = tRNA(Ala) + glycine + H(+). It catalyses the reaction a D-aminoacyl-tRNA + H2O = a tRNA + a D-alpha-amino acid + H(+). Functionally, an aminoacyl-tRNA editing enzyme that deacylates mischarged D-aminoacyl-tRNAs. Also deacylates mischarged glycyl-tRNA(Ala), protecting cells against glycine mischarging by AlaRS. Acts via tRNA-based rather than protein-based catalysis; rejects L-amino acids rather than detecting D-amino acids in the active site. By recycling D-aminoacyl-tRNA to D-amino acids and free tRNA molecules, this enzyme counteracts the toxicity associated with the formation of D-aminoacyl-tRNA entities in vivo and helps enforce protein L-homochirality. This is D-aminoacyl-tRNA deacylase from Streptococcus agalactiae serotype Ia (strain ATCC 27591 / A909 / CDC SS700).